The sequence spans 361 residues: Chorismate synthase (361 aa).

Residues Arg-48 and Arg-54 each coordinate NADP(+). Residues 125–127 (RSS), 238–239 (NA), Gly-278, 293–297 (KPTSS), and Arg-319 contribute to the FMN site.

It belongs to the chorismate synthase family. In terms of assembly, homotetramer. FMNH2 is required as a cofactor.

The catalysed reaction is 5-O-(1-carboxyvinyl)-3-phosphoshikimate = chorismate + phosphate. It participates in metabolic intermediate biosynthesis; chorismate biosynthesis; chorismate from D-erythrose 4-phosphate and phosphoenolpyruvate: step 7/7. Catalyzes the anti-1,4-elimination of the C-3 phosphate and the C-6 proR hydrogen from 5-enolpyruvylshikimate-3-phosphate (EPSP) to yield chorismate, which is the branch point compound that serves as the starting substrate for the three terminal pathways of aromatic amino acid biosynthesis. This reaction introduces a second double bond into the aromatic ring system. In Citrobacter koseri (strain ATCC BAA-895 / CDC 4225-83 / SGSC4696), this protein is Chorismate synthase.